The sequence spans 345 residues: Probable 3'(2'),5'-bisphosphate nucleotidase 4 (345 aa).

The Proton acceptor role is filled by aspartate 46. 4 residues coordinate Mg(2+): glutamate 71, aspartate 134, valine 136, and aspartate 137. Threonine 139 (proton acceptor) is an active-site residue. The adenosine 3',5'-bisphosphate site is built by threonine 139, serine 247, lysine 250, and arginine 264. AMP-binding residues include serine 247, lysine 250, and arginine 264.

The protein belongs to the inositol monophosphatase superfamily. Requires Mg(2+) as cofactor.

The catalysed reaction is 3'-phosphoadenylyl sulfate + H2O = adenosine 5'-phosphosulfate + phosphate. It catalyses the reaction adenosine 3',5'-bisphosphate + H2O = AMP + phosphate. The enzyme catalyses adenosine 2',5'-bisphosphate + H2O = AMP + phosphate. It carries out the reaction 1D-myo-inositol 1,4-bisphosphate + H2O = 1D-myo-inositol 4-phosphate + phosphate. The catalysed reaction is 1D-myo-inositol 1,3,4-trisphosphate + H2O = 1D-myo-inositol 3,4-bisphosphate + phosphate. Its pathway is signal transduction; phosphatidylinositol signaling pathway. Phosphatase that converts adenosine 3'-phosphate 5'-phosphosulfate (PAPS) to adenosine 5'-phosphosulfate (APS) and 3'(2')-phosphoadenosine 5'-phosphate (PAP) to AMP. Is also able to hydrolyze inositol 1,4-bisphosphate and inositol 1,3,4-trisphosphate. In Arabidopsis thaliana (Mouse-ear cress), this protein is Probable 3'(2'),5'-bisphosphate nucleotidase 4 (SAL4).